The following is a 603-amino-acid chain: NADH-ubiquinone oxidoreductase chain 5 (603 aa).

The next 15 helical transmembrane spans lie at 38 to 58 (SIVA…MCLD), 87 to 107 (MMFI…SLWY), 122 to 142 (LIFL…QLFI), 144 to 160 (WEGV…WWYA), 171 to 191 (AILY…WFIL), 211 to 233 (TPLL…HPWL), 241 to 261 (TPVS…FLLI), 272 to 292 (LIQT…AVCA), 301 to 320 (IVAF…IGIN), 325 to 347 (AFLH…GSII), 370 to 390 (STSL…TGFY), 407 to 429 (WALS…MILL), 458 to 478 (AAGS…ASPF), 482 to 502 (IPLY…LTAL), and 582 to 602 (GMIK…LLLI).

It belongs to the complex I subunit 5 family. In terms of assembly, core subunit of respiratory chain NADH dehydrogenase (Complex I) which is composed of 45 different subunits.

The protein resides in the mitochondrion inner membrane. The catalysed reaction is a ubiquinone + NADH + 5 H(+)(in) = a ubiquinol + NAD(+) + 4 H(+)(out). Functionally, core subunit of the mitochondrial membrane respiratory chain NADH dehydrogenase (Complex I) which catalyzes electron transfer from NADH through the respiratory chain, using ubiquinone as an electron acceptor. Essential for the catalytic activity and assembly of complex I. The chain is NADH-ubiquinone oxidoreductase chain 5 (MT-ND5) from Homo sapiens (Human).